A 403-amino-acid polypeptide reads, in one-letter code: Mitochondrial intermembrane space import and assembly protein 40 (403 aa).

A mitochondrion-targeting transit peptide spans 1-31 (MLRNLVVRNACRNRPSIQVARGLCRHQTRRL). At 33-46 (ASSPQFGRNSNQEK) the chain is on the mitochondrial matrix side. Residues 47-66 (TAGFIMGILSMAGALYFIAP) traverse the membrane as a helical; Signal-anchor for type II membrane protein segment. Topologically, residues 67–403 (NRKPLFASRK…KEPLNEESKP (337 aa)) are mitochondrial intermembrane. Composition is skewed to basic and acidic residues over residues 75 to 84 (RKVESDKTAE), 101 to 118 (NNSKSDENGDDNDSKNDE), 147 to 168 (EDNKSSEDKDTDESKVSTKDDE), 206 to 230 (SEKKDPEHSDDEKSQQGQSDDKTTT), and 262 to 271 (EELRKQEEKQ). Residues 75-292 (RKVESDKTAE…GAYNPDTGEI (218 aa)) are disordered. 3 disulfides stabilise this stretch: Cys296–Cys298, Cys307–Cys340, and Cys317–Cys330. One can recognise a CHCH domain in the interval 304–348 (HGPCGEEFKSAFSCFVYSEAEPKGIDCVEKFQHMQDCFRKYPEHY). Short sequence motifs (cx9C motif) lie at residues 307–317 (CGEEFKSAFSC) and 330–340 (CVEKFQHMQDC). A disordered region spans residues 351 to 403 (QLKETSDDEEPQDKVKVNTIESAPNVSSAKENAAKKAEQSDVKKEPLNEESKP). Over residues 369-378 (TIESAPNVSS) the composition is skewed to polar residues. The segment covering 382 to 403 (NAAKKAEQSDVKKEPLNEESKP) has biased composition (basic and acidic residues).

Monomer. Interacts with the FAD-linked sulfhydryl oxidase ERV1 and with the substrate proteins COX17, TIM9, and TIM13, forming transient intermolecular disulfide bridges. Interacts with FCJ1. Requires Cu(2+) as cofactor. Zn(2+) is required as a cofactor.

The protein resides in the mitochondrion inner membrane. In terms of biological role, required for the import and folding of small cysteine-containing proteins (small Tim) in the mitochondrial intermembrane space (IMS). Forms a redox cycle with ERV1 that involves a disulfide relay system. Precursor proteins to be imported into the IMS are translocated in their reduced form into the mitochondria. The oxidized form of MIA40 forms a transient intermolecular disulfide bridge with the reduced precursor protein, resulting in oxidation of the precursor protein that now contains an intramolecular disulfide bond and is able to undergo folding in the IMS. Reduced MIA40 is reoxidized by FAD-linked sulfhydryl oxidase ERV1. This chain is Mitochondrial intermembrane space import and assembly protein 40 (MIA40), found in Saccharomyces cerevisiae (strain ATCC 204508 / S288c) (Baker's yeast).